A 276-amino-acid chain; its full sequence is NH(3)-dependent NAD(+) synthetase (276 aa).

An ATP-binding site is contributed by 43-50 (GISGGVDS). Asp49 is a Mg(2+) binding site. Arg146 contributes to the deamido-NAD(+) binding site. Thr166 is a binding site for ATP. Glu171 serves as a coordination point for Mg(2+). Deamido-NAD(+) is bound by residues Lys179 and Asp186. The ATP site is built by Lys195 and Thr217. 266–267 (HK) serves as a coordination point for deamido-NAD(+).

Belongs to the NAD synthetase family. As to quaternary structure, homodimer.

The enzyme catalyses deamido-NAD(+) + NH4(+) + ATP = AMP + diphosphate + NAD(+) + H(+). Its pathway is cofactor biosynthesis; NAD(+) biosynthesis; NAD(+) from deamido-NAD(+) (ammonia route): step 1/1. Its function is as follows. Catalyzes the ATP-dependent amidation of deamido-NAD to form NAD. Uses ammonia as a nitrogen source. The polypeptide is NH(3)-dependent NAD(+) synthetase (Shewanella oneidensis (strain ATCC 700550 / JCM 31522 / CIP 106686 / LMG 19005 / NCIMB 14063 / MR-1)).